An 89-amino-acid chain; its full sequence is Large ribosomal subunit protein uL23c (89 aa).

This sequence belongs to the universal ribosomal protein uL23 family. As to quaternary structure, part of the 50S ribosomal subunit.

Its subcellular location is the plastid. The protein resides in the chloroplast. Binds to 23S rRNA. In Staurastrum punctulatum (Green alga), this protein is Large ribosomal subunit protein uL23c (rpl23).